The chain runs to 1736 residues: Hybrid signal transduction histidine kinase I (1736 aa).

Residues 143 to 161 show a composition bias toward low complexity; sequence HNINNNQNNQNSVNINSSN. The tract at residues 143 to 171 is disordered; that stretch reads HNINNNQNNQNSVNINSSNKGQYNRPEPS. A PAC domain is found at 234-286; the sequence is FEYPLRINRKNDNLVRYIQLKGEIIKKDDKVFKVLGVCHDFSEIQEAKDKLEE. Residues 287-358 form the PAS domain; the sequence is ESKFVEALIG…QINLEKSGTP (72 aa). Residues 378 to 469 form a disordered region; it reads TSNQQQSSLS…NTTNGIGGAT (92 aa). Residues 379-389 are compositionally biased toward low complexity; sequence SNQQQSSLSKS. The span at 392–412 shows a compositional bias: polar residues; sequence PRSQSNCSNGNKSQNRLSKNY. Residues 413-469 show a composition bias toward low complexity; it reads STTTTTTNNNNNNNNNNNNNNNNNNNNNSISQQQQTQVSTQQTQQQQNTTNGIGGAT. The Histidine kinase domain occupies 556 to 908; sequence NISHELLSPM…TFHFILSIKS (353 aa). Position 559 is a phosphohistidine; by autocatalysis (histidine 559). Disordered regions lie at residues 711 to 821, 952 to 971, 1080 to 1124, 1157 to 1258, 1277 to 1301, 1330 to 1393, and 1419 to 1520; these read NSKT…KREK, TKKV…TNYG, NGNN…KQHS, PPKS…ILSP, SLTP…INNG, ASSP…NLSS, and SNNL…PPIL. Acidic residues-rich tracts occupy residues 725-735 and 758-789; these read SIDGDYDDQDN and ELDE…DDDT. Composition is skewed to low complexity over residues 790 to 807, 961 to 971, and 1080 to 1096; these read SSNT…FHNN, DNGNNDSTNYG, and NGNN…NNNI. Residues 1097-1117 are compositionally biased toward polar residues; it reads QTPNGLNNSRGSSLISTPSTK. 2 stretches are compositionally biased toward low complexity: residues 1186-1195 and 1202-1258; these read SSPPINSSSS and TNGS…ILSP. Polar residues predominate over residues 1330 to 1339; that stretch reads ASSPKQSQRG. 4 stretches are compositionally biased toward low complexity: residues 1340–1376, 1425–1475, 1482–1492, and 1506–1520; these read YSPK…QQQQ, NNNN…STPE, SPRSNNNNNCS, and SSTI…PPIL. Residues 1551 to 1674 enclose the Response regulatory domain; it reads KVLVAEDNTM…LLYEVINTQI (124 aa). Residue aspartate 1605 is modified to 4-aspartylphosphate. A compositionally biased stretch (low complexity) spans 1695–1722; it reads NNNNNNTNNNNNNNNSSNPVNNNNSNSI. The tract at residues 1695–1736 is disordered; that stretch reads NNNNNNTNNNNNNNNSSNPVNNNNSNSIDATQQELNNEKIRI.

In terms of processing, activation probably requires transfer of a phosphate group between a histidine in the kinase core (transmitter) domain and an aspartate of the receiver domain.

The catalysed reaction is ATP + protein L-histidine = ADP + protein N-phospho-L-histidine.. Acts as a receptor histidine kinase for a signal transduction pathway. This protein undergoes an ATP-dependent autophosphorylation at a conserved histidine residue in the kinase core, and a phosphoryl group is then transferred to a conserved aspartate residue in the receiver domain. The polypeptide is Hybrid signal transduction histidine kinase I (dhkI-1) (Dictyostelium discoideum (Social amoeba)).